A 71-amino-acid chain; its full sequence is Small ribosomal subunit protein bS21 (71 aa).

The interval 40–71 (KPTQERKRKAAAAVKRNIRRTSRDVTKRKRLY) is disordered. The segment covering 45–71 (RKRKAAAAVKRNIRRTSRDVTKRKRLY) has biased composition (basic residues).

This sequence belongs to the bacterial ribosomal protein bS21 family.

In Xylella fastidiosa (strain M23), this protein is Small ribosomal subunit protein bS21.